The sequence spans 549 residues: Probable protein kinase UbiB (549 aa).

A Protein kinase domain is found at 123 to 501 (DFEDTPLASA…QQKAHKSNYL (379 aa)). ATP-binding positions include 129-137 (LASASISQV) and Lys-152. The active-site Proton acceptor is the Asp-287. A run of 2 helical transmembrane segments spans residues 498–518 (SNYL…LLNQ) and 520–540 (ATLW…VLGW).

It belongs to the ABC1 family. UbiB subfamily.

The protein localises to the cell inner membrane. It functions in the pathway cofactor biosynthesis; ubiquinone biosynthesis [regulation]. Its function is as follows. Is probably a protein kinase regulator of UbiI activity which is involved in aerobic coenzyme Q (ubiquinone) biosynthesis. The polypeptide is Probable protein kinase UbiB (Shewanella piezotolerans (strain WP3 / JCM 13877)).